A 424-amino-acid polypeptide reads, in one-letter code: Serine--tRNA ligase (424 aa).

Position 231 to 233 (231 to 233 (TAE)) interacts with L-serine. Position 262–264 (262–264 (RSE)) interacts with ATP. Residue Glu-285 coordinates L-serine. 349–352 (EISS) serves as a coordination point for ATP. Ser-385 contributes to the L-serine binding site.

This sequence belongs to the class-II aminoacyl-tRNA synthetase family. Type-1 seryl-tRNA synthetase subfamily. Homodimer. The tRNA molecule binds across the dimer.

The protein localises to the cytoplasm. The catalysed reaction is tRNA(Ser) + L-serine + ATP = L-seryl-tRNA(Ser) + AMP + diphosphate + H(+). The enzyme catalyses tRNA(Sec) + L-serine + ATP = L-seryl-tRNA(Sec) + AMP + diphosphate + H(+). The protein operates within aminoacyl-tRNA biosynthesis; selenocysteinyl-tRNA(Sec) biosynthesis; L-seryl-tRNA(Sec) from L-serine and tRNA(Sec): step 1/1. In terms of biological role, catalyzes the attachment of serine to tRNA(Ser). Is also able to aminoacylate tRNA(Sec) with serine, to form the misacylated tRNA L-seryl-tRNA(Sec), which will be further converted into selenocysteinyl-tRNA(Sec). The chain is Serine--tRNA ligase from Bacillus cytotoxicus (strain DSM 22905 / CIP 110041 / 391-98 / NVH 391-98).